Consider the following 271-residue polypeptide: Formamidopyrimidine-DNA glycosylase (271 aa).

Catalysis depends on Pro2, which acts as the Schiff-base intermediate with DNA. Glu3 serves as the catalytic Proton donor. The active-site Proton donor; for beta-elimination activity is Lys58. Residues His92, Arg111, and Arg152 each coordinate DNA. The FPG-type zinc finger occupies 237–271; it reads FVYGREGEACKQCGRVLKHATIGQRATVWCGSCQR. Catalysis depends on Arg261, which acts as the Proton donor; for delta-elimination activity.

It belongs to the FPG family. As to quaternary structure, monomer. Zn(2+) is required as a cofactor.

It catalyses the reaction Hydrolysis of DNA containing ring-opened 7-methylguanine residues, releasing 2,6-diamino-4-hydroxy-5-(N-methyl)formamidopyrimidine.. The enzyme catalyses 2'-deoxyribonucleotide-(2'-deoxyribose 5'-phosphate)-2'-deoxyribonucleotide-DNA = a 3'-end 2'-deoxyribonucleotide-(2,3-dehydro-2,3-deoxyribose 5'-phosphate)-DNA + a 5'-end 5'-phospho-2'-deoxyribonucleoside-DNA + H(+). In terms of biological role, involved in base excision repair of DNA damaged by oxidation or by mutagenic agents. Acts as a DNA glycosylase that recognizes and removes damaged bases. Has a preference for oxidized purines, such as 7,8-dihydro-8-oxoguanine (8-oxoG). Has AP (apurinic/apyrimidinic) lyase activity and introduces nicks in the DNA strand. Cleaves the DNA backbone by beta-delta elimination to generate a single-strand break at the site of the removed base with both 3'- and 5'-phosphates. This chain is Formamidopyrimidine-DNA glycosylase, found in Xanthomonas axonopodis pv. citri (strain 306).